The primary structure comprises 334 residues: Large ribosomal subunit protein uL3 (334 aa).

Basic residues predominate over residues 1 to 10; the sequence is MGMKKNRPRR. Residues 1–21 are disordered; the sequence is MGMKKNRPRRGSLAFSPRKRA.

It belongs to the universal ribosomal protein uL3 family. Part of the 50S ribosomal subunit. Forms a cluster with proteins L14 and L24e.

In terms of biological role, one of the primary rRNA binding proteins, it binds directly near the 3'-end of the 23S rRNA, where it nucleates assembly of the 50S subunit. The chain is Large ribosomal subunit protein uL3 from Methanococcus maripaludis (strain DSM 14266 / JCM 13030 / NBRC 101832 / S2 / LL).